We begin with the raw amino-acid sequence, 281 residues long: Probable replication-associated protein repA1 (281 aa).

The protein belongs to the IncFII RepA family.

This protein is essential for plasmid replication; it is involved in copy control functions. The sequence is that of Probable replication-associated protein repA1 (repA1) from Buchnera aphidicola subsp. Cinara cedri (strain Cc).